The primary structure comprises 400 residues: Lipase member N (400 aa).

Positions 1 to 19 (MPMMWLFLTTACLIPGTLS) are cleaved as a signal peptide. The AB hydrolase-1 domain occupies 81–381 (PVVYMQHALF…DWNHFDFVWG (301 aa)). S175 serves as the catalytic Nucleophile. A disulfide bridge connects residues C249 and C258. The N-linked (GlcNAc...) asparagine glycan is linked to N274. Active-site charge relay system residues include D346 and H375.

Belongs to the AB hydrolase superfamily. Lipase family. In terms of tissue distribution, highly expressed in the epidermis. Also detected in other tissues, although at much lower levels, including liver and kidney.

The protein localises to the secreted. It carries out the reaction a sterol ester + H2O = a sterol + a fatty acid + H(+). The catalysed reaction is a triacylglycerol + H2O = a 1,2-diacylglycerol + a fatty acid + H(+). It catalyses the reaction a triacylglycerol + H2O = a diacylglycerol + a fatty acid + H(+). The enzyme catalyses a cholesterol ester + H2O = cholesterol + a fatty acid + H(+). In terms of biological role, plays a highly specific role in the last step of keratinocyte differentiation. Contains two distinct domains: the alpha/beta hydrolase fold and the abhydrolase-associated lipase region, also features the consensus sequence of the active site of a genuine lipase. May have an essential function in lipid metabolism of the most differentiated epidermal layers. This Mus musculus (Mouse) protein is Lipase member N (Lipn).